The following is a 199-amino-acid chain: Patulin biosynthesis cluster protein F (199 aa).

Residues 1 to 21 (MKSSLWVSLAVSLIGLGPAAA) form the signal peptide. N-linked (GlcNAc...) asparagine glycosylation is found at N129 and N183.

The protein belongs to the patF family.

It localises to the cytoplasm. The protein resides in the cytosol. The catalysed reaction is phyllostine = neopatulin. The protein operates within mycotoxin biosynthesis; patulin biosynthesis. Part of the gene cluster that mediates the biosynthesis of patulin, an acetate-derived tetraketide mycotoxin produced by several fungal species that shows antimicrobial properties against several bacteria. PatF catalyzes the conversion of phyllostine into neopatulin. The pathway begins with the synthesis of 6-methylsalicylic acid by the polyketide synthase (PKS) patK via condensation of acetate and malonate units. The 6-methylsalicylic acid decarboxylase patG then catalyzes the decarboxylation of 6-methylsalicylic acid to yield m-cresol (also known as 3-methylphenol). These first reactions occur in the cytosol. The intermediate m-cresol is then transported into the endoplasmic reticulum where the cytochrome P450 monooxygenase patH converts it to m-hydroxybenzyl alcohol, which is further converted to gentisyl alcohol by the cytochrome P450 monooxygenase patI. The oxidoreductases patJ and patO further convert gentisyl alcohol to isoepoxydon in the vacuole. PatN catalyzes then the transformation of isoepoxydon into phyllostine. The cluster protein patF is responsible for the conversion from phyllostine to neopatulin whereas the alcohol dehydrogenase patD converts neopatulin to E-ascladiol. The steps between isoepoxydon and E-ascladiol occur in the cytosol, and E-ascladiol is probably secreted to the extracellular space by one of the cluster-specific transporters patC or patM. Finally, the secreted patulin synthase patE catalyzes the conversion of E-ascladiol to patulin. The sequence is that of Patulin biosynthesis cluster protein F from Penicillium expansum (Blue mold rot fungus).